A 357-amino-acid chain; its full sequence is Protein-glutamate methylesterase/protein-glutamine glutaminase 1 (357 aa).

The 118-residue stretch at 10–127 (RTLIVDDSAF…DVNKIEKELV (118 aa)) folds into the Response regulatory domain. A 4-aspartylphosphate modification is found at Asp-61. The 195-residue stretch at 159 to 353 (SCAGDFAVLI…EEIVRMSEVK (195 aa)) folds into the CheB-type methylesterase domain. Active-site residues include Ser-171, His-198, and Asp-295.

Belongs to the CheB family. In terms of processing, phosphorylated by CheA. Phosphorylation of the N-terminal regulatory domain activates the methylesterase activity.

It is found in the cytoplasm. It catalyses the reaction [protein]-L-glutamate 5-O-methyl ester + H2O = L-glutamyl-[protein] + methanol + H(+). It carries out the reaction L-glutaminyl-[protein] + H2O = L-glutamyl-[protein] + NH4(+). In terms of biological role, involved in chemotaxis. Part of a chemotaxis signal transduction system that modulates chemotaxis in response to various stimuli. Catalyzes the demethylation of specific methylglutamate residues introduced into the chemoreceptors (methyl-accepting chemotaxis proteins or MCP) by CheR. Also mediates the irreversible deamidation of specific glutamine residues to glutamic acid. In Methanosarcina mazei (strain ATCC BAA-159 / DSM 3647 / Goe1 / Go1 / JCM 11833 / OCM 88) (Methanosarcina frisia), this protein is Protein-glutamate methylesterase/protein-glutamine glutaminase 1.